Consider the following 261-residue polypeptide: 5'-nucleotidase SurE (261 aa).

4 residues coordinate a divalent metal cation: aspartate 8, aspartate 9, serine 43, and asparagine 96.

The protein belongs to the SurE nucleotidase family. The cofactor is a divalent metal cation.

The protein resides in the cytoplasm. The catalysed reaction is a ribonucleoside 5'-phosphate + H2O = a ribonucleoside + phosphate. Functionally, nucleotidase that shows phosphatase activity on nucleoside 5'-monophosphates. The sequence is that of 5'-nucleotidase SurE from Dinoroseobacter shibae (strain DSM 16493 / NCIMB 14021 / DFL 12).